Here is a 127-residue protein sequence, read N- to C-terminus: Small ribosomal subunit protein uS12 (127 aa).

Basic residues predominate over residues 11–20 (GRKPKKKKSK). Positions 11–30 (GRKPKKKKSKAPALQGNPQK) are disordered. Aspartate 89 is modified (3-methylthioaspartic acid). Residues 105-127 (AGVEGRRQSRSKYGAKRPKDQKK) are disordered. The segment covering 112–127 (QSRSKYGAKRPKDQKK) has biased composition (basic residues).

Belongs to the universal ribosomal protein uS12 family. As to quaternary structure, part of the 30S ribosomal subunit. Contacts proteins S8 and S17. May interact with IF1 in the 30S initiation complex.

In terms of biological role, with S4 and S5 plays an important role in translational accuracy. Interacts with and stabilizes bases of the 16S rRNA that are involved in tRNA selection in the A site and with the mRNA backbone. Located at the interface of the 30S and 50S subunits, it traverses the body of the 30S subunit contacting proteins on the other side and probably holding the rRNA structure together. The combined cluster of proteins S8, S12 and S17 appears to hold together the shoulder and platform of the 30S subunit. This chain is Small ribosomal subunit protein uS12, found in Thermotoga maritima (strain ATCC 43589 / DSM 3109 / JCM 10099 / NBRC 100826 / MSB8).